The following is a 233-amino-acid chain: Sugar fermentation stimulation protein homolog (233 aa).

The protein belongs to the SfsA family.

The sequence is that of Sugar fermentation stimulation protein homolog from Saccharophagus degradans (strain 2-40 / ATCC 43961 / DSM 17024).